Consider the following 537-residue polypeptide: MQETGVHNGAYGTDKFGLKNLKGVYWNFGAPQLYEHALKNGEAVLSSDGALVADTGVFTGRSPKDKFTVRDATTENTMWWGGNQSITAEQFEALYQDFLKHAEGMTLFAQDLYGGADPTFRIKTRVYTELAWHSLFIRTLLRRPERAELENFVPELTLIDLPSFRADPKRHGCRSENVVAIDFARKIVLIGGTQYAGEMKKSVFTTLNYYLPEKGVLPMHCSANVGPNGDTAIFFGLSGTGKTTLSADPNRTLIGDDEHGWGKDGVFNFEGGCYAKCIKLSSENEPEIYAASTRFGAVLENVVLGELDRKPDFDDGSKTENTRSAYPLESIPNASLTGRAGQPKNVVMLAADAFGVMPPIAKLTPAQAMYHFLSGYTAKVAGTERGVTEPTPEFSTCFGSPFLPRDPSVYGNMLRELIAKHNVDCWLVNTGWTGGIYGTGHRMPIKVTRALLTAALDGSLRNVEFRTDPYFGFAVPTALPGVPSEILDPVKTWADKAAFDTTARKLVGMFQKNFAKFEAQVDAEVRAAAPDVKMAVE.

R61, Y195, and K201 together coordinate substrate. ATP contacts are provided by residues K201, H220, and 236-244 (GLSGTGKTT). Mn(2+) is bound by residues K201 and H220. D257 contacts Mn(2+). Residues E285, R323, and T448 each contribute to the ATP site. Position 323 (R323) interacts with substrate.

This sequence belongs to the phosphoenolpyruvate carboxykinase (ATP) family. Mn(2+) serves as cofactor.

It localises to the cytoplasm. The catalysed reaction is oxaloacetate + ATP = phosphoenolpyruvate + ADP + CO2. The protein operates within carbohydrate biosynthesis; gluconeogenesis. Involved in the gluconeogenesis. Catalyzes the conversion of oxaloacetate (OAA) to phosphoenolpyruvate (PEP) through direct phosphoryl transfer between the nucleoside triphosphate and OAA. The protein is Phosphoenolpyruvate carboxykinase (ATP) of Rhodopseudomonas palustris (strain ATCC BAA-98 / CGA009).